The chain runs to 250 residues: Probable transcriptional regulatory protein DP2908 (250 aa).

The protein belongs to the TACO1 family.

The protein resides in the cytoplasm. The sequence is that of Probable transcriptional regulatory protein DP2908 from Desulfotalea psychrophila (strain LSv54 / DSM 12343).